The sequence spans 422 residues: Transcription termination factor Rho (422 aa).

A Rho RNA-BD domain is found at 52-127 (EVGGDGVLEV…TRVTKINFDD (76 aa)). ATP is bound by residues 173–178 (GKGQRG), 185–190 (RTGKTV), and Arg-216.

This sequence belongs to the Rho family. Homohexamer. The homohexamer assembles into an open ring structure.

Functionally, facilitates transcription termination by a mechanism that involves Rho binding to the nascent RNA, activation of Rho's RNA-dependent ATPase activity, and release of the mRNA from the DNA template. The polypeptide is Transcription termination factor Rho (Cereibacter sphaeroides (strain ATCC 17023 / DSM 158 / JCM 6121 / CCUG 31486 / LMG 2827 / NBRC 12203 / NCIMB 8253 / ATH 2.4.1.) (Rhodobacter sphaeroides)).